The sequence spans 299 residues: Bifunctional protein FolD (299 aa).

Residues 168–170 (GRS), S193, and I234 contribute to the NADP(+) site.

The protein belongs to the tetrahydrofolate dehydrogenase/cyclohydrolase family. Homodimer.

It catalyses the reaction (6R)-5,10-methylene-5,6,7,8-tetrahydrofolate + NADP(+) = (6R)-5,10-methenyltetrahydrofolate + NADPH. It carries out the reaction (6R)-5,10-methenyltetrahydrofolate + H2O = (6R)-10-formyltetrahydrofolate + H(+). It participates in one-carbon metabolism; tetrahydrofolate interconversion. In terms of biological role, catalyzes the oxidation of 5,10-methylenetetrahydrofolate to 5,10-methenyltetrahydrofolate and then the hydrolysis of 5,10-methenyltetrahydrofolate to 10-formyltetrahydrofolate. The protein is Bifunctional protein FolD of Bartonella henselae (strain ATCC 49882 / DSM 28221 / CCUG 30454 / Houston 1) (Rochalimaea henselae).